The following is a 1056-amino-acid chain: Carbamoyl phosphate synthase large chain (1056 aa).

A carboxyphosphate synthetic domain region spans residues 1–398 (MPRDPSIKKV…AFLKALRSLD (398 aa)). Positions 127, 167, 173, 174, 206, 208, 213, 239, 240, 241, 282, and 295 each coordinate ATP. One can recognise an ATP-grasp 1 domain in the interval 131–324 (RDLMNRIGEP…IARVASKIAI (194 aa)). 3 residues coordinate Mg(2+): Gln282, Glu295, and Asn297. Mn(2+)-binding residues include Gln282, Glu295, and Asn297. The tract at residues 399–532 (TDVEHHTVLS…STYGDKVCEV (134 aa)) is oligomerization domain. The segment at 533 to 921 (THSDRKKVMI…YKASIAAHNR (389 aa)) is carbamoyl phosphate synthetic domain. The 192-residue stretch at 663-854 (SVLLDSLSIP…LAKIAARVMM (192 aa)) folds into the ATP-grasp 2 domain. Residues Arg699, Arg738, Leu740, Glu745, Gly770, Val771, His772, Ser773, Gln813, and Glu825 each contribute to the ATP site. 3 residues coordinate Mg(2+): Gln813, Glu825, and Asn827. Mn(2+) contacts are provided by Gln813, Glu825, and Asn827. The MGS-like domain maps to 920–1056 (NRLPKSGNVF…IEPLQHYIGR (137 aa)). Residues 922–1056 (LPKSGNVFIS…IEPLQHYIGR (135 aa)) form an allosteric domain region.

This sequence belongs to the CarB family. In terms of assembly, composed of two chains; the small (or glutamine) chain promotes the hydrolysis of glutamine to ammonia, which is used by the large (or ammonia) chain to synthesize carbamoyl phosphate. Tetramer of heterodimers (alpha,beta)4. It depends on Mg(2+) as a cofactor. Mn(2+) serves as cofactor.

It carries out the reaction hydrogencarbonate + L-glutamine + 2 ATP + H2O = carbamoyl phosphate + L-glutamate + 2 ADP + phosphate + 2 H(+). The enzyme catalyses hydrogencarbonate + NH4(+) + 2 ATP = carbamoyl phosphate + 2 ADP + phosphate + 2 H(+). Its pathway is amino-acid biosynthesis; L-arginine biosynthesis; carbamoyl phosphate from bicarbonate: step 1/1. It functions in the pathway pyrimidine metabolism; UMP biosynthesis via de novo pathway; (S)-dihydroorotate from bicarbonate: step 1/3. In terms of biological role, large subunit of the glutamine-dependent carbamoyl phosphate synthetase (CPSase). CPSase catalyzes the formation of carbamoyl phosphate from the ammonia moiety of glutamine, carbonate, and phosphate donated by ATP, constituting the first step of 2 biosynthetic pathways, one leading to arginine and/or urea and the other to pyrimidine nucleotides. The large subunit (synthetase) binds the substrates ammonia (free or transferred from glutamine from the small subunit), hydrogencarbonate and ATP and carries out an ATP-coupled ligase reaction, activating hydrogencarbonate by forming carboxy phosphate which reacts with ammonia to form carbamoyl phosphate. The protein is Carbamoyl phosphate synthase large chain of Methanospirillum hungatei JF-1 (strain ATCC 27890 / DSM 864 / NBRC 100397 / JF-1).